The following is a 322-amino-acid chain: Hapalindole dimethylallyltransferase (322 aa).

8 residues coordinate dimethylallyl diphosphate: Arg-46, Arg-60, Lys-115, Asn-166, Tyr-168, Arg-221, Tyr-225, and Lys-275.

It belongs to the aromatic prenyltransferase family.

It carries out the reaction hapalindole G + dimethylallyl diphosphate = ambiguine A + diphosphate. It catalyses the reaction hapalindole U + dimethylallyl diphosphate + H(+) = ambiguine H + diphosphate. Activity is slightly increased in the presence of Mg(2+). Functionally, prenyltransferase involved in the biosynthesis of ambiguines, a family of hapalindole-type alkaloids. Catalyzes the reverse prenylation of hapalindole G or U at the C2 position with dimethylallyl diphosphate (DMAPP) to generate ambiguine A or H, respectively. In addition, accepts hapalindole A, an epimer of hapalindole G, and catalyzes normal prenylation at its C2 position. The polypeptide is Hapalindole dimethylallyltransferase (Fischerella ambigua (strain UTEX 1903)).